The sequence spans 418 residues: 3-isopropylmalate dehydratase large subunit 1 (418 aa).

The [4Fe-4S] cluster site is built by C298, C358, and C361.

It belongs to the aconitase/IPM isomerase family. LeuC type 2 subfamily. In terms of assembly, heterodimer of LeuC and LeuD. [4Fe-4S] cluster is required as a cofactor.

It carries out the reaction (2R,3S)-3-isopropylmalate = (2S)-2-isopropylmalate. The protein operates within amino-acid biosynthesis; L-leucine biosynthesis; L-leucine from 3-methyl-2-oxobutanoate: step 2/4. Functionally, catalyzes the isomerization between 2-isopropylmalate and 3-isopropylmalate, via the formation of 2-isopropylmaleate. The protein is 3-isopropylmalate dehydratase large subunit 1 of Thermotoga maritima (strain ATCC 43589 / DSM 3109 / JCM 10099 / NBRC 100826 / MSB8).